A 620-amino-acid polypeptide reads, in one-letter code: MEEQVLPELDVAELELQAVIGFNGHVPNGLKCHPDQEHLIYPLGCTVLIQAINTNEQNFLHGHGNNVSCVTISKEGDYIASGQVTFMGFKADIILWDFKKRELIARLSLHKGKIEALAFSPNDLYLVSLGGPDDGSVVVWSIAKRDAICGSPAAGLNVGNATSVVFSRCRDEMFVTAGNGTIRVWELDLPNRKIWPTECQTGQMKRIVLSTGMADDDSFFYLGTTTGDILKMNPKTKLLADTGPVKDKFSLGVSALRCLKMGGLLVGSGAGLLIFCKSPSYKPIKKVQLQGGITSITLRGEGHQFFVGTEESHIYRVNFTDFKETLIATCHFEAVQDIVFPFGTAELFATCAKKDIRVWHTMSKRELLRITVPNMTCHGIDFMRDGKSIISAWDDGKIRAFAPESGRLMYTINSAHRIGVTAIATTSDCKRIISGGGEGEVRVWQVGCQTQKLEEALKEHKSSVSCIRVKKNNEECVTASTDGTCIIWDLVRLRRNQMILANTLFQCVCYHPEEFQIITSGTDRKIAYWEVFDGSVIRELEGSLSGSINGMDITQEGGHFVTGGHDHLVKVWDYNEGEVTHVGVGHSGNIMAMRISPGNQYIVSVSADGAILRWKYPFAS.

11 WD repeats span residues 62–106 (GHGN…LIAR), 109–150 (LHKG…AICG), 156–195 (LNVG…RKIW), 288–327 (QLQG…ETLI), 330–369 (CHFE…ELLR), 372–411 (VPNM…LMYT), 415–454 (AHRI…QKLE), 459–498 (EHKS…RNQM), 500–541 (LANT…RELE), 543–582 (SLSG…VTHV), and 585–620 (GHSG…PFAS).

The protein belongs to the CFAP52 family. In terms of assembly, microtubule inner protein component of sperm flagellar doublet microtubules. Interacts with BRCA2. Interacts with the CCT chaperonin complex. Interacts with HSP70. Interacts with AK8. Interacts with CFAP45. Interacts with DNAI1. Interacts with IQDC.

It localises to the cytoplasm. The protein localises to the cytoskeleton. The protein resides in the cilium axoneme. Its subcellular location is the flagellum axoneme. In terms of biological role, microtubule inner protein (MIP) part of the dynein-decorated doublet microtubules (DMTs) in cilia axoneme. Important for proper ciliary and flagellar beating. May act in cooperation with CFAP45 and axonemal dynein subunit DNAH11. May play a role in cell growth and/or survival. The polypeptide is Cilia- and flagella-associated protein 52 (Mus musculus (Mouse)).